Here is a 718-residue protein sequence, read N- to C-terminus: Scarecrow-like protein 9 (718 aa).

The disordered stretch occupies residues 305-338 (VEKKKASDAQGGKRRARGRGRGRGRGGGGGQNGK). Positions 316-328 (GKRRARGRGRGRG) are enriched in basic residues. In terms of domain architecture, GRAS spans 335–713 (QNGKKEVVDL…RTVMALSVWK (379 aa)). The segment at 342 to 402 (VDLRSLLIHC…EARLAGTGSQ (61 aa)) is leucine repeat I (LRI). Residues 421–484 (HQLFLACCPF…YGSPKVRITG (64 aa)) form a VHIID region. A VHIID motif is present at residues 452-456 (VHVID). The interval 500–532 (ETGQRLAAYAKLFGVPFEYKAIAKKWDAIQLED) is leucine repeat II (LRII). The PFYRE stretch occupies residues 541–635 (TVVNCLYRAE…MEVFGREALN (95 aa)). Positions 638–713 (ACEGWERVER…RTVMALSVWK (76 aa)) are SAW.

This sequence belongs to the GRAS family. Expressed in cotyledons, leaves and flowers, and in the elongation zone in root.

The protein resides in the nucleus. Its function is as follows. Probable transcription factor involved in plant development. In Arabidopsis thaliana (Mouse-ear cress), this protein is Scarecrow-like protein 9 (SCL9).